A 461-amino-acid chain; its full sequence is Fumarate hydratase class II (461 aa).

Substrate contacts are provided by residues 97–99 (SGT), 127–130 (HPND), 137–139 (SSN), and threonine 185. The active-site Proton donor/acceptor is histidine 186. Residue serine 316 is part of the active site. Substrate is bound by residues serine 317 and 322–324 (KVN).

Belongs to the class-II fumarase/aspartase family. Fumarase subfamily. As to quaternary structure, homotetramer.

It localises to the cytoplasm. The enzyme catalyses (S)-malate = fumarate + H2O. Its pathway is carbohydrate metabolism; tricarboxylic acid cycle; (S)-malate from fumarate: step 1/1. Its function is as follows. Involved in the TCA cycle. Catalyzes the stereospecific interconversion of fumarate to L-malate. The protein is Fumarate hydratase class II of Staphylococcus aureus (strain COL).